The following is a 1432-amino-acid chain: Gag-Pol polyprotein (1432 aa).

2 consecutive CCHC-type zinc fingers follow at residues 368–385 (QRCYGCGKPGHIRRDCKN) and 386–403 (QKCFKCGKPGHLQRNCKS). In terms of domain architecture, Peptidase A2 spans 452 to 525 (VRALIDTGAD…TPVNLLGRSV (74 aa)). D457 (for protease activity; shared with dimeric partner) is an active-site residue. Positions 579–766 (DGKISRTPWD…EQVQWLGYEL (188 aa)) constitute a Reverse transcriptase domain. Mg(2+)-binding residues include D645, D720, and D721. The stretch at 815–843 (KGKTDLKDKIKLTEEAIQCLETVNKRLKD) forms a coiled coil. The 121-residue stretch at 959 to 1079 (IERYPTYYTD…VDQEVQKALQ (121 aa)) folds into the RNase H type-1 domain. D968, E999, D1019, and D1071 together coordinate Mg(2+). The Integrase-type zinc finger occupies 1157 to 1198 (EAIPQAIEEHEKWHTTAEILAREFQLPRRVAREIVHRCQACK). Zn(2+)-binding residues include H1166, H1170, C1194, and C1197. The Integrase catalytic domain maps to 1206 to 1358 (RGTNPRERFL…TPYEIYLESE (153 aa)). Mg(2+) contacts are provided by D1219 and D1271. Residues 1376–1422 (KWAYVRDKRKVWKGPYKVLWDGEGAAVVEENAMPTLYPHRHMRFIPP) constitute a DNA-binding region (integrase-type).

Specific enzymatic cleavages by the viral protease yield mature proteins. The protease is released by autocatalytic cleavage. The polyprotein is cleaved during and after budding, this process is termed maturation.

The protein resides in the virion. The enzyme catalyses DNA(n) + a 2'-deoxyribonucleoside 5'-triphosphate = DNA(n+1) + diphosphate. The catalysed reaction is Endohydrolysis of RNA in RNA/DNA hybrids. Three different cleavage modes: 1. sequence-specific internal cleavage of RNA. Human immunodeficiency virus type 1 and Moloney murine leukemia virus enzymes prefer to cleave the RNA strand one nucleotide away from the RNA-DNA junction. 2. RNA 5'-end directed cleavage 13-19 nucleotides from the RNA end. 3. DNA 3'-end directed cleavage 15-20 nucleotides away from the primer terminus.. It catalyses the reaction 3'-end directed exonucleolytic cleavage of viral RNA-DNA hybrid.. Its function is as follows. Matrix protein p16 forms the outer shell of the core of the virus, lining the inner surface of the viral membrane. Capsid protein p26 forms the conical core of the virus that encapsulates the genomic RNA-nucleocapsid complex. In terms of biological role, the aspartyl protease mediates proteolytic cleavages of Gag and Gag-Pol polyproteins during or shortly after the release of the virion from the plasma membrane. Cleavages take place as an ordered, step-wise cascade to yield mature proteins. This process is called maturation. Displays maximal activity during the budding process just prior to particle release from the cell. Functionally, reverse transcriptase/ribonuclease H (RT) is a multifunctional enzyme that converts the viral RNA genome into dsDNA in the cytoplasm, shortly after virus entry into the cell. This enzyme displays a DNA polymerase activity that can copy either DNA or RNA templates, and a ribonuclease H (RNase H) activity that cleaves the RNA strand of RNA-DNA heteroduplexes in a partially processive 3' to 5' endonucleasic mode. Conversion of viral genomic RNA into dsDNA requires many steps. A tRNA binds to the primer-binding site (PBS) situated at the 5'-end of the viral RNA. RT uses the 3' end of the tRNA primer to perform a short round of RNA-dependent minus-strand DNA synthesis. The reading proceeds through the U5 region and ends after the repeated (R) region which is present at both ends of viral RNA. The portion of the RNA-DNA heteroduplex is digested by the RNase H, resulting in a ssDNA product attached to the tRNA primer. This ssDNA/tRNA hybridizes with the identical R region situated at the 3' end of viral RNA. This template exchange, known as minus-strand DNA strong stop transfer, can be either intra- or intermolecular. RT uses the 3' end of this newly synthesized short ssDNA to perform the RNA-dependent minus-strand DNA synthesis of the whole template. RNase H digests the RNA template except for a polypurine tract (PPT) situated at the 5'-end of the genome. It is not clear if both polymerase and RNase H activities are simultaneous. RNase H probably can proceed both in a polymerase-dependent (RNA cut into small fragments by the same RT performing DNA synthesis) and a polymerase-independent mode (cleavage of remaining RNA fragments by free RTs). Secondly, RT performs DNA-directed plus-strand DNA synthesis using the PPT that has not been removed by RNase H as primer. PPT and tRNA primers are then removed by RNase H. The 3' and 5' ssDNA PBS regions hybridize to form a circular dsDNA intermediate. Strand displacement synthesis by RT to the PBS and PPT ends produces a blunt ended, linear dsDNA copy of the viral genome that includes long terminal repeats (LTRs) at both ends. Its function is as follows. Integrase catalyzes viral DNA integration into the host chromosome, by performing a series of DNA cutting and joining reactions. This enzyme activity takes place after virion entry into a cell and reverse transcription of the RNA genome in dsDNA. The protein is Gag-Pol polyprotein (gag-pol) of Jembrana disease virus (JDV).